The sequence spans 337 residues: Ketol-acid reductoisomerase (NADP(+)) (337 aa).

The KARI N-terminal Rossmann domain occupies 3 to 183 (LEMFYDDDAD…GGTRAGVIKT (181 aa)). NADP(+)-binding positions include 26–29 (YGSQ), Lys49, Ser52, Ser54, and 84–87 (DTAQ). Residue His109 is part of the active site. Gly135 lines the NADP(+) pocket. One can recognise a KARI C-terminal knotted domain in the interval 184 to 329 (TFKDETETDL…KKLRDLMSWV (146 aa)). Asp192, Glu196, Glu228, and Glu232 together coordinate Mg(2+). Ser253 is a substrate binding site.

Belongs to the ketol-acid reductoisomerase family. The cofactor is Mg(2+).

It catalyses the reaction (2R)-2,3-dihydroxy-3-methylbutanoate + NADP(+) = (2S)-2-acetolactate + NADPH + H(+). The enzyme catalyses (2R,3R)-2,3-dihydroxy-3-methylpentanoate + NADP(+) = (S)-2-ethyl-2-hydroxy-3-oxobutanoate + NADPH + H(+). It functions in the pathway amino-acid biosynthesis; L-isoleucine biosynthesis; L-isoleucine from 2-oxobutanoate: step 2/4. The protein operates within amino-acid biosynthesis; L-valine biosynthesis; L-valine from pyruvate: step 2/4. Functionally, involved in the biosynthesis of branched-chain amino acids (BCAA). Catalyzes an alkyl-migration followed by a ketol-acid reduction of (S)-2-acetolactate (S2AL) to yield (R)-2,3-dihydroxy-isovalerate. In the isomerase reaction, S2AL is rearranged via a Mg-dependent methyl migration to produce 3-hydroxy-3-methyl-2-ketobutyrate (HMKB). In the reductase reaction, this 2-ketoacid undergoes a metal-dependent reduction by NADPH to yield (R)-2,3-dihydroxy-isovalerate. In Mycobacterium bovis (strain BCG / Pasteur 1173P2), this protein is Ketol-acid reductoisomerase (NADP(+)).